An 89-amino-acid chain; its full sequence is Small ribosomal subunit protein uS15 (89 aa).

The protein belongs to the universal ribosomal protein uS15 family. As to quaternary structure, part of the 30S ribosomal subunit. Forms a bridge to the 50S subunit in the 70S ribosome, contacting the 23S rRNA.

In terms of biological role, one of the primary rRNA binding proteins, it binds directly to 16S rRNA where it helps nucleate assembly of the platform of the 30S subunit by binding and bridging several RNA helices of the 16S rRNA. Forms an intersubunit bridge (bridge B4) with the 23S rRNA of the 50S subunit in the ribosome. In Sulfurovum sp. (strain NBC37-1), this protein is Small ribosomal subunit protein uS15.